Consider the following 345-residue polypeptide: Heat-inducible transcription repressor HrcA (345 aa).

Belongs to the HrcA family.

Functionally, negative regulator of class I heat shock genes (grpE-dnaK-dnaJ and groELS operons). Prevents heat-shock induction of these operons. The protein is Heat-inducible transcription repressor HrcA of Zymomonas mobilis subsp. mobilis (strain ATCC 31821 / ZM4 / CP4).